The sequence spans 226 residues: Thymidylate kinase (226 aa).

9–16 (GPEGSGKS) contributes to the ATP binding site.

Belongs to the thymidylate kinase family.

It catalyses the reaction dTMP + ATP = dTDP + ADP. In terms of biological role, phosphorylation of dTMP to form dTDP in both de novo and salvage pathways of dTTP synthesis. The sequence is that of Thymidylate kinase from Roseiflexus sp. (strain RS-1).